Here is a 216-residue protein sequence, read N- to C-terminus: Large ribosomal subunit protein uL1 (216 aa).

This sequence belongs to the universal ribosomal protein uL1 family. In terms of assembly, part of the 50S ribosomal subunit.

Binds directly to 23S rRNA. Probably involved in E site tRNA release. Functionally, protein L1 is also a translational repressor protein, it controls the translation of its operon by binding to its mRNA. The polypeptide is Large ribosomal subunit protein uL1 (Thermococcus kodakarensis (strain ATCC BAA-918 / JCM 12380 / KOD1) (Pyrococcus kodakaraensis (strain KOD1))).